A 317-amino-acid polypeptide reads, in one-letter code: MATH domain and coiled-coil domain-containing protein At3g58240 (317 aa).

One can recognise an MATH domain in the interval 6–131; it reads DNKFTWVIKN…DGEVEIVAQI (126 aa). Residues 254 to 305 are a coiled coil; that stretch reads KLDWLEKKLDEVKEIKKKCERVTEMEKELHDLMNKHTNVSKLLEKEKLEIKN.

The sequence is that of MATH domain and coiled-coil domain-containing protein At3g58240 from Arabidopsis thaliana (Mouse-ear cress).